A 189-amino-acid polypeptide reads, in one-letter code: uncharacterized protein (189 aa).

Helical transmembrane passes span 20–40 (FILG…YLTF), 46–66 (TIII…IILI), 100–120 (VLLF…SLNI), and 126–146 (FVLY…GDVI).

This sequence to M.jannaschii MJ0795.1 and MJ1249.1.

Its subcellular location is the cell membrane. This is an uncharacterized protein from Methanocaldococcus jannaschii (strain ATCC 43067 / DSM 2661 / JAL-1 / JCM 10045 / NBRC 100440) (Methanococcus jannaschii).